The sequence spans 450 residues: tRNA modification GTPase MnmE (450 aa).

3 residues coordinate (6S)-5-formyl-5,6,7,8-tetrahydrofolate: R23, E79, and K118. The TrmE-type G domain maps to 214 to 374 (GITLILVGKP…LKEHILNKVG (161 aa)). Residue N224 participates in K(+) binding. Residues 224–229 (NAGKSS), 243–249 (TSIAGTT), and 268–271 (DTAG) contribute to the GTP site. S228 lines the Mg(2+) pocket. Residues T243, I245, and T248 each contribute to the K(+) site. Mg(2+) is bound at residue T249. Residue K450 participates in (6S)-5-formyl-5,6,7,8-tetrahydrofolate binding.

The protein belongs to the TRAFAC class TrmE-Era-EngA-EngB-Septin-like GTPase superfamily. TrmE GTPase family. In terms of assembly, homodimer. Heterotetramer of two MnmE and two MnmG subunits. It depends on K(+) as a cofactor.

Its subcellular location is the cytoplasm. Exhibits a very high intrinsic GTPase hydrolysis rate. Involved in the addition of a carboxymethylaminomethyl (cmnm) group at the wobble position (U34) of certain tRNAs, forming tRNA-cmnm(5)s(2)U34. This is tRNA modification GTPase MnmE from Francisella tularensis subsp. novicida (strain U112).